A 21-amino-acid chain; its full sequence is Neuropeptide gamma (21 aa).

Residues 1 to 21 (SSANPQITRKRHKINSFVGLM) are disordered. Met-21 carries the methionine amide modification.

Belongs to the tachykinin family.

It is found in the secreted. Tachykinins are active peptides which excite neurons, evoke behavioral responses, and contract (directly or indirectly) many smooth muscles. Is a potent vasoconstrictor and secretagogue that plays a regulatory role in the central control of ventilation, in particular, the heart rate variability (HRV). The sequence is that of Neuropeptide gamma from Oncorhynchus mykiss (Rainbow trout).